Consider the following 661-residue polypeptide: MAFITLRRAFCHKSILWIPGAVVALKIHPASHAPKAVTDRLSVCFCSLQPELFRVRFHHAYCKNFHSEKGNDFHPVGEPWSSQAQEWNQPGQSLQNEDEEMLFRRLSYFTSFEEVLSFISALDTLPVPLAMAALLRICEIGRRDGEQRLPEGVLENRAFQALCLRCERDPSHLTNAGLVTALQSLLTLLPADPQSSLMLSLVAECQRRLQRGNLEVHHLCVLGESLAMLQGASCETLKLVVRQLQSKSVETFAPEEITSVYRILQVCPEEVDKHQMFLNTLNNFSISVVPYLSPKSISHVLTALVALDQTHALPLLIKLGKYVVRYIPRFTNEELRKVLEAFVYFGHSDRFFTEALEQHVSALCFSLDPAVASSVMGYCSRKRILSKPIFDVVSEIVVCQWDRLSPSQIAELIEPFGKLNYVPPNAPALFRKVENVLCARLHHFPPKMLLRLLHSCALIERHPVNFMSKLFSPFFLQRLQGKESYLDRLSLAQLTQLFLTSVLECPFYKGPKLLPKYQVKSFLTPCCSLETPLDLHLYKSVVIGLIDLLGSRLYFASKVLTPYYYTIDVEVKLDEDGFVLPCTVDEDIHKRVALCIDGPQRFCLDSKHLLGKEATKQRHLRLLGYQVVQLPYHELELLTSRLELVDYLQRKLFSQSSAVHW.

The region spanning 592–650 is the RAP domain; that stretch reads VALCIDGPQRFCLDSKHLLGKEATKQRHLRLLGYQVVQLPYHELELLTSRLELVDYLQR.

This sequence belongs to the FAST kinase family. Expression detected in spleen, testis, colon, heart, smooth muscle, kidney, brain, lung, liver, brown and white adipose tissue with highest expression in testis and smooth muscle.

It localises to the mitochondrion. Required for normal mitochondrial respiration. Increases steady-state levels and half-lives of a subset of mature mitochondrial mRNAs MT-ND2, MT-ND3, MT-CYTB, MT-CO2, and MT-ATP8/6. Promotes MT-CO1 mRNA translation and increases mitochondrial complex IV assembly and activity. This chain is FAST kinase domain-containing protein 3, mitochondrial (Fastkd3), found in Mus musculus (Mouse).